We begin with the raw amino-acid sequence, 466 residues long: A-type ATP synthase subunit B (466 aa).

Belongs to the ATPase alpha/beta chains family. Has multiple subunits with at least A(3), B(3), C, D, E, F, H, I and proteolipid K(x).

It localises to the cell membrane. Functionally, component of the A-type ATP synthase that produces ATP from ADP in the presence of a proton gradient across the membrane. The B chain is a regulatory subunit. The protein is A-type ATP synthase subunit B of Metallosphaera sedula (strain ATCC 51363 / DSM 5348 / JCM 9185 / NBRC 15509 / TH2).